A 382-amino-acid polypeptide reads, in one-letter code: 8-amino-7-oxononanoate synthase (382 aa).

R26 serves as a coordination point for substrate. Residue 104–105 (GY) coordinates pyridoxal 5'-phosphate. H129 is a binding site for substrate. Residues S175, 200-203 (DEAH), and 232-235 (TLSK) each bind pyridoxal 5'-phosphate. K235 carries the N6-(pyridoxal phosphate)lysine modification. Residue T345 participates in substrate binding.

Belongs to the class-II pyridoxal-phosphate-dependent aminotransferase family. BioF subfamily. As to quaternary structure, homodimer. The cofactor is pyridoxal 5'-phosphate.

It catalyses the reaction 6-carboxyhexanoyl-[ACP] + L-alanine + H(+) = (8S)-8-amino-7-oxononanoate + holo-[ACP] + CO2. It participates in cofactor biosynthesis; biotin biosynthesis. Catalyzes the decarboxylative condensation of pimeloyl-[acyl-carrier protein] and L-alanine to produce 8-amino-7-oxononanoate (AON), [acyl-carrier protein], and carbon dioxide. In Mycobacterium sp. (strain JLS), this protein is 8-amino-7-oxononanoate synthase.